Here is a 291-residue protein sequence, read N- to C-terminus: 4,5:9,10-diseco-3-hydroxy-5,9,17-trioxoandrosta-1(10),2-diene-4-oate hydrolase (291 aa).

Residues 45–46, Asn-54, Asn-113, Leu-115, and Arg-192 each bind substrate; that span reads GG. His-269 (proton acceptor) is an active-site residue. Trp-270 is a binding site for substrate.

The protein belongs to the AB hydrolase superfamily. HsaD family. Homodimer.

It catalyses the reaction (1E,2Z)-3-hydroxy-5,9,17-trioxo-4,5:9,10-disecoandrosta-1(10),2-dien-4-oate + H2O = 3-[(3aS,4S,7aS)-7a-methyl-1,5-dioxo-octahydro-1H-inden-4-yl]propanoate + (2Z,4Z)-2-hydroxyhexa-2,4-dienoate + H(+). It carries out the reaction 2,6-dioxo-6-phenylhexa-3-enoate + H2O = 2-oxopent-4-enoate + benzoate + H(+). It functions in the pathway lipid metabolism; steroid biosynthesis. Catalyzes the hydrolysis of a carbon-carbon bond in 4,5: 9,10-diseco-3-hydroxy-5,9,17-trioxoandrosta-1(10),2-diene-4-oate (4,9-DSHA) to yield 9,17-dioxo-1,2,3,4,10,19-hexanorandrostan-5-oate (DOHNAA) and 2-hydroxy-hexa-2,4-dienoate (HHD). Is also able to catalyze the hydrolysis of 2-hydroxy-6-oxo-6-phenylhexa-2,4-dienoic acid (HOPDA) and the synthetic analog 8-(2-chlorophenyl)-2-hydroxy-5-methyl-6-oxoocta-2,4-dienoic acid (HOPODA). The sequence is that of 4,5:9,10-diseco-3-hydroxy-5,9,17-trioxoandrosta-1(10),2-diene-4-oate hydrolase (hsaD) from Mycobacterium tuberculosis (strain ATCC 25618 / H37Rv).